Consider the following 187-residue polypeptide: UPF0340 protein SPG_0604 (187 aa).

This sequence belongs to the UPF0340 family.

The polypeptide is UPF0340 protein SPG_0604 (Streptococcus pneumoniae serotype 19F (strain G54)).